The following is a 213-amino-acid chain: Orotate phosphoribosyltransferase (213 aa).

K26 provides a ligand contact to 5-phospho-alpha-D-ribose 1-diphosphate. Residue 34–35 (FF) participates in orotate binding. Residues 72–73 (YK), R99, K100, K103, H105, and 124–132 (DDVITAGTA) contribute to the 5-phospho-alpha-D-ribose 1-diphosphate site. Residues T128 and R156 each contribute to the orotate site.

Belongs to the purine/pyrimidine phosphoribosyltransferase family. PyrE subfamily. Homodimer. The cofactor is Mg(2+).

It catalyses the reaction orotidine 5'-phosphate + diphosphate = orotate + 5-phospho-alpha-D-ribose 1-diphosphate. It participates in pyrimidine metabolism; UMP biosynthesis via de novo pathway; UMP from orotate: step 1/2. In terms of biological role, catalyzes the transfer of a ribosyl phosphate group from 5-phosphoribose 1-diphosphate to orotate, leading to the formation of orotidine monophosphate (OMP). The polypeptide is Orotate phosphoribosyltransferase (Serratia proteamaculans (strain 568)).